The following is a 517-amino-acid chain: Ribonuclease Y (517 aa).

A helical membrane pass occupies residues 1–21 (MIEFLIGLIAAVVGILVGYLI). The region spanning 207-271 (LINVVNIKND…IAVRTVELLV (65 aa)) is the KH domain. In terms of domain architecture, HD spans 333 to 426 (ALIHSLEVAH…VCTADVLSAA (94 aa)).

The protein belongs to the RNase Y family.

It localises to the cell membrane. Endoribonuclease that initiates mRNA decay. This is Ribonuclease Y from Campylobacter hominis (strain ATCC BAA-381 / DSM 21671 / CCUG 45161 / LMG 19568 / NCTC 13146 / CH001A).